The primary structure comprises 141 residues: VLTEEDKSRVRAAWGPVSKNAELYGAETLTRLFTAYPATKTYFHHFDLSPGSSNLKTHGKKVIDAITEAVNNLDDVAGALSKLSDLHAQKLRVDPVNFKLLGHCLEVTIAAHNGGPLKPEVILSLDKFLCLVAKTLVSRYR.

The Globin domain maps to 1–141 (VLTEEDKSRV…VAKTLVSRYR (141 aa)). His-58 serves as a coordination point for O2. Position 87 (His-87) interacts with heme b.

This sequence belongs to the globin family. Heterotetramer of two alpha chains and two beta chains. Red blood cells.

Involved in oxygen transport from the lung to the various peripheral tissues. The protein is Hemoglobin subunit alpha-A of Drymarchon melanurus erebennus (Texas indigo snake).